Consider the following 75-residue polypeptide: Penaeidin-3k (75 aa).

The first 19 residues, 1–19 (MRLVVCLVFLASFALVCQG), serve as a signal peptide directing secretion. Glutamine 20 bears the Pyrrolidone carboxylic acid mark. Disulfide bonds link cysteine 44–cysteine 59, cysteine 48–cysteine 66, and cysteine 60–cysteine 67. Serine 74 is modified (serine amide).

It belongs to the penaeidin family.

It localises to the cytoplasmic granule. Its function is as follows. Antibacterial and antifungal activity. Presents chitin-binding activity. The polypeptide is Penaeidin-3k (Penaeus setiferus (Atlantic white shrimp)).